The sequence spans 110 residues: MDNIDVIEELYNVILDRKENGKENSYTNYLFEKGIDKILKKVGEETTEVIVAAKNTNKDDLIAEVCDVIYHMVVLMVEKEVKLEDIKNELNKRRKKVGNKKPERRKIENI.

The protein belongs to the PRA-PH family.

The protein localises to the cytoplasm. It catalyses the reaction 1-(5-phospho-beta-D-ribosyl)-ATP + H2O = 1-(5-phospho-beta-D-ribosyl)-5'-AMP + diphosphate + H(+). It participates in amino-acid biosynthesis; L-histidine biosynthesis; L-histidine from 5-phospho-alpha-D-ribose 1-diphosphate: step 2/9. In Clostridium novyi (strain NT), this protein is Phosphoribosyl-ATP pyrophosphatase.